The sequence spans 387 residues: Putative ribosomal RNA large subunit methyltransferase MJ1649 (387 aa).

The region spanning 5 to 81 (LIKLEIDRRA…EEIDYDFFYK (77 aa)) is the PUA domain.

This sequence belongs to the methyltransferase superfamily. RlmI family.

It is found in the cytoplasm. This chain is Putative ribosomal RNA large subunit methyltransferase MJ1649, found in Methanocaldococcus jannaschii (strain ATCC 43067 / DSM 2661 / JAL-1 / JCM 10045 / NBRC 100440) (Methanococcus jannaschii).